The following is a 145-amino-acid chain: Bacilliredoxin SSP1241 (145 aa).

This sequence belongs to the bacilliredoxin family.

This is Bacilliredoxin SSP1241 from Staphylococcus saprophyticus subsp. saprophyticus (strain ATCC 15305 / DSM 20229 / NCIMB 8711 / NCTC 7292 / S-41).